Here is an 860-residue protein sequence, read N- to C-terminus: Valine--tRNA ligase (860 aa).

The 'HIGH' region signature appears at 43–53 (PTVSGALHVGH). A disordered region spans residues 469-491 (LPVDPSSDAPTGYQESQRNQPGG). The 'KMSKS' region signature appears at 574-578 (KMSKS). Lysine 577 provides a ligand contact to ATP.

It belongs to the class-I aminoacyl-tRNA synthetase family. ValS type 2 subfamily. Monomer.

Its subcellular location is the cytoplasm. It catalyses the reaction tRNA(Val) + L-valine + ATP = L-valyl-tRNA(Val) + AMP + diphosphate. Functionally, catalyzes the attachment of valine to tRNA(Val). As ValRS can inadvertently accommodate and process structurally similar amino acids such as threonine, to avoid such errors, it has a 'posttransfer' editing activity that hydrolyzes mischarged Thr-tRNA(Val) in a tRNA-dependent manner. The polypeptide is Valine--tRNA ligase (Salinispora tropica (strain ATCC BAA-916 / DSM 44818 / JCM 13857 / NBRC 105044 / CNB-440)).